A 403-amino-acid chain; its full sequence is Argininosuccinate synthase (403 aa).

ATP-binding positions include 12 to 20 (AYSGGLDTS) and Ala39. 2 residues coordinate L-citrulline: Tyr90 and Ser95. Residue Gly120 participates in ATP binding. L-aspartate contacts are provided by Thr122, Asn126, and Asp127. Asn126 lines the L-citrulline pocket. L-citrulline is bound by residues Arg130, Ser182, Ser191, Glu267, and Tyr279.

The protein belongs to the argininosuccinate synthase family. Type 1 subfamily. As to quaternary structure, homotetramer.

The protein localises to the cytoplasm. It catalyses the reaction L-citrulline + L-aspartate + ATP = 2-(N(omega)-L-arginino)succinate + AMP + diphosphate + H(+). It participates in amino-acid biosynthesis; L-arginine biosynthesis; L-arginine from L-ornithine and carbamoyl phosphate: step 2/3. The sequence is that of Argininosuccinate synthase from Vesicomyosocius okutanii subsp. Calyptogena okutanii (strain HA).